The sequence spans 801 residues: Protocadherin beta-8 (801 aa).

Positions 1–29 are cleaved as a signal peptide; that stretch reads MEASGKLICRQRQVLFSFLLLGLSLAGAA. At 30 to 691 the chain is on the extracellular side; sequence EPRSYSVVEE…GQADSLTVYL (662 aa). 5 Cadherin domains span residues 36 to 134, 139 to 243, 248 to 348, 353 to 452, and 457 to 562; these read VVEE…SPVF, MLVK…APEF, YRVQ…APEV, FTSP…APAF, and YTLF…SPFV. A disulfide bridge connects residues Cys97 and Cys103. N-linked (GlcNAc...) asparagine glycans are attached at residues Asn419 and Asn437. Asn568 is a glycosylation site (N-linked (GlcNAc...) asparagine). Residues 569 to 672 form the Cadherin 6 domain; the sequence is SSAPCTELVP…LVDGFSQPYL (104 aa). Residues 692–710 form a helical membrane-spanning segment; the sequence is VVALASVSSLFLFSVLLFV. Residues 711–801 are Cytoplasmic-facing; sequence AVRLCRRSRA…NGFGFSLQLK (91 aa).

As to quaternary structure, forms homodimers in trans (molecules expressed by two different cells). Forms promiscuous heterodimers in cis (at the plasma membrane of the same cell) with other protocadherins.

The protein localises to the cell membrane. Its function is as follows. Calcium-dependent cell-adhesion protein involved in cells self-recognition and non-self discrimination. Thereby, it is involved in the establishment and maintenance of specific neuronal connections in the brain. The polypeptide is Protocadherin beta-8 (Pan troglodytes (Chimpanzee)).